A 148-amino-acid chain; its full sequence is Protein ORM1 (148 aa).

Helical transmembrane passes span 12-32, 36-56, 89-109, and 111-131; these read WIIHVVVITLLKLFFNLFPGV, WSWTLTNMTYVVGSYVMFHLI, FLIIVPIALFLVSTHYAHYDL, and MFSWNCFLTTFVAVVPKLPVT.

This sequence to yeast YLR350W C-terminus.

It is found in the membrane. This chain is Protein ORM1 (ORM1), found in Saccharomyces pastorianus (strain ATCC 76670 / Carlsberg bottom yeast no.2 / CBS 1503 / CLIB 180 / NBRC 10610 / NRRL Y-1525) (Saaz-type lager yeast).